The sequence spans 139 residues: Small ribosomal subunit protein bS6 (139 aa).

This sequence belongs to the bacterial ribosomal protein bS6 family.

In terms of biological role, binds together with bS18 to 16S ribosomal RNA. The protein is Small ribosomal subunit protein bS6 of Borreliella afzelii (strain PKo) (Borrelia afzelii).